A 431-amino-acid polypeptide reads, in one-letter code: tRNA(Ile)-lysidine synthase (431 aa).

Residue 25–30 participates in ATP binding; sequence SGGLDS.

Belongs to the tRNA(Ile)-lysidine synthase family.

It localises to the cytoplasm. The enzyme catalyses cytidine(34) in tRNA(Ile2) + L-lysine + ATP = lysidine(34) in tRNA(Ile2) + AMP + diphosphate + H(+). In terms of biological role, ligates lysine onto the cytidine present at position 34 of the AUA codon-specific tRNA(Ile) that contains the anticodon CAU, in an ATP-dependent manner. Cytidine is converted to lysidine, thus changing the amino acid specificity of the tRNA from methionine to isoleucine. In Legionella pneumophila (strain Paris), this protein is tRNA(Ile)-lysidine synthase.